The following is a 1289-amino-acid chain: Trafficking protein particle complex II-specific subunit 120 (1289 aa).

Residues 354–365 (STGISPVDSNSK) show a composition bias toward polar residues. The interval 354-374 (STGISPVDSNSKATASTTASS) is disordered. Phosphoserine occurs at positions 379 and 387.

It belongs to the TRS120 family. Part of the multisubunit TRAPP (transport protein particle) II complex composed of BET3, BET5, TRS20, TRS23, TRS31, TRS33, TRS65, TRS120 and TRS130. Interacts directly with TRS65.

It is found in the golgi apparatus. The protein localises to the cis-Golgi network. In terms of biological role, specific subunit of the TRAPP II complex, a highly conserved vesicle tethering complex that functions in the late Golgi as a guanine nucleotide exchanger (GEF) for the Golgi YPT1 GTPase. TRS120 plays a role in the YPT GEF activity of TRAPP II in concert with the two other TRAPP II-specific subunits TRS65 and TRS130. The chain is Trafficking protein particle complex II-specific subunit 120 (TRS120) from Saccharomyces cerevisiae (strain ATCC 204508 / S288c) (Baker's yeast).